The chain runs to 319 residues: Pantothenate kinase (319 aa).

101–108 is a binding site for ATP; it reads GSVAVGKS.

It belongs to the prokaryotic pantothenate kinase family.

Its subcellular location is the cytoplasm. It catalyses the reaction (R)-pantothenate + ATP = (R)-4'-phosphopantothenate + ADP + H(+). It functions in the pathway cofactor biosynthesis; coenzyme A biosynthesis; CoA from (R)-pantothenate: step 1/5. This chain is Pantothenate kinase, found in Clavibacter michiganensis subsp. michiganensis (strain NCPPB 382).